We begin with the raw amino-acid sequence, 585 residues long: SLAIN motif-containing protein-like (585 aa).

Disordered stretches follow at residues 1–34, 55–125, 324–365, 402–476, and 492–585; these read MVVP…PNLT, NQTL…RVEE, QDYA…EDEC, PRLS…SDGQ, and GSMS…DGCY. The segment covering 68–83 has biased composition (polar residues); the sequence is GGTNNSNLKAGSNINN. Residues 327–345 show a composition bias toward low complexity; that stretch reads ASTSASRRSSSASLQSLRR. Over residues 351 to 365 the composition is skewed to acidic residues; sequence QEFDSYSQEDEEDEC. Composition is skewed to polar residues over residues 425–434, 441–476, and 549–563; these read PNLTPRTSLR, NSRS…SDGQ, and ASPS…TPRS. A compositionally biased stretch (basic and acidic residues) spans 575–585; the sequence is LTDESWKDGCY.

Belongs to the SLAIN motif-containing family.

This is SLAIN motif-containing protein-like from Danio rerio (Zebrafish).